The chain runs to 136 residues: Protein scalloped (136 aa).

It localises to the nucleus. Probable transcription factor that function in the regulation of cell-specific gene expression during drosophila development, particularly in the differentiation of the nervous system. This chain is Protein scalloped (SD), found in Junonia coenia (Peacock butterfly).